The following is a 276-amino-acid chain: Malectin-B (276 aa).

An N-terminal signal peptide occupies residues 1 to 26 (MLSIRTVLGPLAAILLTVIGPFGAHG). The Lumenal segment spans residues 27–253 (SGLADKVMWA…TPNPYASDNS (227 aa)). Tyr67, Tyr89, Tyr116, Phe117, and Asp186 together coordinate a carbohydrate. Residues 202–249 (DVPQLQPHPGLEKKEEEEEEEEEEGSPSKKQSNKNRVQSGPRTPNPYA) form a disordered region. The span at 216–226 (EEEEEEEEEEG) shows a compositional bias: acidic residues. Residues 229–249 (SKKQSNKNRVQSGPRTPNPYA) are compositionally biased toward polar residues. Asn252 is a glycosylation site (N-linked (GlcNAc...) asparagine). A helical transmembrane segment spans residues 254–274 (SLMFPILVAFGVFIPTLFCLC). Topologically, residues 275–276 (RL) are cytoplasmic.

This sequence belongs to the malectin family.

Its subcellular location is the endoplasmic reticulum membrane. Its function is as follows. Carbohydrate-binding protein with a strong ligand preference for Glc2-N-glycan. May play a role in the early steps of protein N-glycosylation. Can bind di- or higher oligomers but not monomers of glucose, including maltose, maltotriose, maltotetraose, maltoheptaose, nigerose, kojibose, cellobiose and isomaltose, although based on their subcellular locations, these are unlikely to all be physiological ligands. The protein is Malectin-B of Xenopus laevis (African clawed frog).